The chain runs to 332 residues: Aspartate carbamoyltransferase catalytic subunit (332 aa).

2 residues coordinate carbamoyl phosphate: Arg54 and Thr55. Lys82 is a binding site for L-aspartate. Carbamoyl phosphate-binding residues include Arg104, His134, and Gln137. Positions 175 and 230 each coordinate L-aspartate. Positions 271 and 272 each coordinate carbamoyl phosphate. Residues 312-332 (GGPDGDSTTSPGSGPEGGTTP) are disordered.

This sequence belongs to the aspartate/ornithine carbamoyltransferase superfamily. ATCase family. Heterododecamer (2C3:3R2) of six catalytic PyrB chains organized as two trimers (C3), and six regulatory PyrI chains organized as three dimers (R2).

It catalyses the reaction carbamoyl phosphate + L-aspartate = N-carbamoyl-L-aspartate + phosphate + H(+). Its pathway is pyrimidine metabolism; UMP biosynthesis via de novo pathway; (S)-dihydroorotate from bicarbonate: step 2/3. Its function is as follows. Catalyzes the condensation of carbamoyl phosphate and aspartate to form carbamoyl aspartate and inorganic phosphate, the committed step in the de novo pyrimidine nucleotide biosynthesis pathway. The polypeptide is Aspartate carbamoyltransferase catalytic subunit (Beutenbergia cavernae (strain ATCC BAA-8 / DSM 12333 / CCUG 43141 / JCM 11478 / NBRC 16432 / NCIMB 13614 / HKI 0122)).